We begin with the raw amino-acid sequence, 547 residues long: Chaperonin GroEL 1 (547 aa).

ATP contacts are provided by residues 30–33 (TLGP), lysine 51, 87–91 (DGTTT), glycine 415, and aspartate 495.

Belongs to the chaperonin (HSP60) family. Forms a cylinder of 14 subunits composed of two heptameric rings stacked back-to-back. Interacts with the co-chaperonin GroES.

It is found in the cytoplasm. It carries out the reaction ATP + H2O + a folded polypeptide = ADP + phosphate + an unfolded polypeptide.. In terms of biological role, together with its co-chaperonin GroES, plays an essential role in assisting protein folding. The GroEL-GroES system forms a nano-cage that allows encapsulation of the non-native substrate proteins and provides a physical environment optimized to promote and accelerate protein folding. This Rhizobium johnstonii (strain DSM 114642 / LMG 32736 / 3841) (Rhizobium leguminosarum bv. viciae) protein is Chaperonin GroEL 1.